Here is a 477-residue protein sequence, read N- to C-terminus: Bifunctional protein HldE (477 aa).

The segment at 1 to 319 is ribokinase; that stretch reads MTPPLPGFRD…AALGGGPAPA (319 aa). 195-198 provides a ligand contact to ATP; it reads NLAE. Residue Asp-264 is part of the active site. Residues 346–477 form a cytidylyltransferase region; the sequence is MTNGCFDLLH…DLIARIRSRG (132 aa).

This sequence in the N-terminal section; belongs to the carbohydrate kinase PfkB family. It in the C-terminal section; belongs to the cytidylyltransferase family. Homodimer.

The catalysed reaction is D-glycero-beta-D-manno-heptose 7-phosphate + ATP = D-glycero-beta-D-manno-heptose 1,7-bisphosphate + ADP + H(+). The enzyme catalyses D-glycero-beta-D-manno-heptose 1-phosphate + ATP + H(+) = ADP-D-glycero-beta-D-manno-heptose + diphosphate. It functions in the pathway nucleotide-sugar biosynthesis; ADP-L-glycero-beta-D-manno-heptose biosynthesis; ADP-L-glycero-beta-D-manno-heptose from D-glycero-beta-D-manno-heptose 7-phosphate: step 1/4. It participates in nucleotide-sugar biosynthesis; ADP-L-glycero-beta-D-manno-heptose biosynthesis; ADP-L-glycero-beta-D-manno-heptose from D-glycero-beta-D-manno-heptose 7-phosphate: step 3/4. In terms of biological role, catalyzes the phosphorylation of D-glycero-D-manno-heptose 7-phosphate at the C-1 position to selectively form D-glycero-beta-D-manno-heptose-1,7-bisphosphate. Catalyzes the ADP transfer from ATP to D-glycero-beta-D-manno-heptose 1-phosphate, yielding ADP-D-glycero-beta-D-manno-heptose. The sequence is that of Bifunctional protein HldE from Halorhodospira halophila (strain DSM 244 / SL1) (Ectothiorhodospira halophila (strain DSM 244 / SL1)).